A 325-amino-acid polypeptide reads, in one-letter code: D site-binding protein (325 aa).

Disordered stretches follow at residues 1–98 (MARP…AGPS), 124–203 (LEHG…EVLM), and 230–256 (FSEEELKPQPIMKKARKVQVPEEQKDE). Residues 17-28 (GPAGAPPGGGAL) are compositionally biased toward gly residues. Low complexity predominate over residues 71–80 (AGPADAPSGA). Position 86 is a phosphoserine (Ser86). The segment covering 88-98 (RGRSGPVAGPS) has biased composition (low complexity). Residues 129–153 (PPSPPPPGGLSPAPSPARTPAPSPG) are compositionally biased toward pro residues. Residues 154–171 (PGSCSSSSPRSSPGHAPA) are compositionally biased toward low complexity. Residues 255–318 (DEKYWSRRYK…SHYRAVLSRY (64 aa)) enclose the bZIP domain. The tract at residues 257 to 279 (KYWSRRYKNNEAAKRSRDARRLK) is basic motif. The segment at 283–297 (ISVRAAFLEKENALL) is leucine-zipper.

This sequence belongs to the bZIP family. PAR subfamily. Binds DNA as a homodimer or a heterodimer. Can form a heterodimer with TEF. As to expression, expressed in the suprachiasmatic nuclei (SCN) and in most peripheral tissues, with a strong circadian rhythmicity.

Its subcellular location is the nucleus. This transcriptional activator recognizes and binds to the sequence 5'-RTTAYGTAAY-3' found in the promoter of genes such as albumin, CYP2A4 and CYP2A5. It is not essential for circadian rhythm generation, but modulates important clock output genes. May be a direct target for regulation by the circadian pacemaker component clock. May affect circadian period and sleep regulation. This is D site-binding protein (Dbp) from Mus musculus (Mouse).